A 238-amino-acid polypeptide reads, in one-letter code: tRNA (guanine-N(1)-)-methyltransferase (238 aa).

Residues G108 and 127-132 each bind S-adenosyl-L-methionine; that span reads LGDFVL.

This sequence belongs to the RNA methyltransferase TrmD family. Homodimer.

The protein localises to the cytoplasm. It carries out the reaction guanosine(37) in tRNA + S-adenosyl-L-methionine = N(1)-methylguanosine(37) in tRNA + S-adenosyl-L-homocysteine + H(+). In terms of biological role, specifically methylates guanosine-37 in various tRNAs. This chain is tRNA (guanine-N(1)-)-methyltransferase, found in Streptococcus uberis (strain ATCC BAA-854 / 0140J).